The sequence spans 91 residues: Putative transmembrane protein encoded by LINC00862 (91 aa).

A helical membrane pass occupies residues 49-69 (IMALILMPSLHCFGNILILLF).

Its subcellular location is the membrane. In Homo sapiens (Human), this protein is Putative transmembrane protein encoded by LINC00862 (LINC00862).